A 20-amino-acid polypeptide reads, in one-letter code: Cicerin (20 aa).

The tract at residues 1–20 (ARCENFADSYRQPPISSSQT) is disordered.

Its function is as follows. Has antifungal activity against B.cinerea, F.oxysporum and M.arachidicola. Inhibits cell-free translation in rabbit reticulocyte lysate system. The protein is Cicerin of Cicer arietinum (Chickpea).